The primary structure comprises 515 residues: mRNA export factor ICP27 homolog (515 aa).

Zn(2+) contacts are provided by Cys-230, His-335, Cys-337, and Cys-342. The CHC2-type zinc finger occupies 230–342 (CVFNDNGHGD…SNHKCDDVSC (113 aa)). The span at 398–408 (YSTNHDLPQTS) shows a compositional bias: polar residues. The segment at 398–422 (YSTNHDLPQTSHRSHKNHGTPKVKS) is disordered. Over residues 409 to 422 (HRSHKNHGTPKVKS) the composition is skewed to basic residues.

This sequence belongs to the HHV-1 ICP27 protein family.

The protein localises to the virion tegument. It is found in the virion. Its subcellular location is the host nucleus. The protein resides in the host cytoplasm. Immediate early (EI) protein that plays many roles during productive infection including regulation of viral gene expression and nuclear export of intronless viral RNAs. The polypeptide is mRNA export factor ICP27 homolog (Human herpesvirus 6A (strain Uganda-1102) (HHV-6 variant A)).